The chain runs to 61 residues: uncharacterized protein (61 aa).

Residues 10–61 are a coiled coil; sequence YEEENDNEDFEEEVELSREDLNQIINELAPFLIKLLTDLTELTQKKEESENE.

This is an uncharacterized protein from Acidianus bottle-shaped virus (isolate Italy/Pozzuoli) (ABV).